Consider the following 400-residue polypeptide: Enoyl-[acyl-carrier-protein] reductase [NADH] (400 aa).

NAD(+) is bound by residues 48–53 (GSSSGY), 74–75 (FE), 111–112 (DA), and 139–140 (LA). Residue tyrosine 225 coordinates substrate. Tyrosine 235 serves as the catalytic Proton donor. NAD(+) is bound by residues lysine 244 and 273-275 (VVT).

It belongs to the TER reductase family. In terms of assembly, monomer.

The enzyme catalyses a 2,3-saturated acyl-[ACP] + NAD(+) = a (2E)-enoyl-[ACP] + NADH + H(+). Its pathway is lipid metabolism; fatty acid biosynthesis. Involved in the final reduction of the elongation cycle of fatty acid synthesis (FAS II). Catalyzes the reduction of a carbon-carbon double bond in an enoyl moiety that is covalently linked to an acyl carrier protein (ACP). The chain is Enoyl-[acyl-carrier-protein] reductase [NADH] from Shewanella loihica (strain ATCC BAA-1088 / PV-4).